The primary structure comprises 385 residues: 1-deoxy-D-xylulose 5-phosphate reductoisomerase (385 aa).

Residues threonine 10, glycine 11, serine 12, isoleucine 13, lysine 37, and asparagine 124 each coordinate NADPH. Lysine 125 lines the 1-deoxy-D-xylulose 5-phosphate pocket. Glutamate 126 serves as a coordination point for NADPH. Aspartate 150 contributes to the Mn(2+) binding site. Serine 151, glutamate 152, serine 176, and histidine 199 together coordinate 1-deoxy-D-xylulose 5-phosphate. Glutamate 152 is a Mn(2+) binding site. Glycine 205 serves as a coordination point for NADPH. Residues serine 212, asparagine 217, lysine 218, and glutamate 221 each contribute to the 1-deoxy-D-xylulose 5-phosphate site. A Mn(2+)-binding site is contributed by glutamate 221.

Belongs to the DXR family. The cofactor is Mg(2+). Mn(2+) serves as cofactor.

It catalyses the reaction 2-C-methyl-D-erythritol 4-phosphate + NADP(+) = 1-deoxy-D-xylulose 5-phosphate + NADPH + H(+). It functions in the pathway isoprenoid biosynthesis; isopentenyl diphosphate biosynthesis via DXP pathway; isopentenyl diphosphate from 1-deoxy-D-xylulose 5-phosphate: step 1/6. Catalyzes the NADPH-dependent rearrangement and reduction of 1-deoxy-D-xylulose-5-phosphate (DXP) to 2-C-methyl-D-erythritol 4-phosphate (MEP). This chain is 1-deoxy-D-xylulose 5-phosphate reductoisomerase, found in Clostridium botulinum (strain Okra / Type B1).